Reading from the N-terminus, the 193-residue chain is Probable GTP-binding protein EngB (193 aa).

The EngB-type G domain occupies 22–193; the sequence is GLPEFAFAGR…LIAVLESYLA (172 aa). GTP-binding positions include 30-37, 57-61, 75-78, 142-145, and 173-175; these read GRSNVGKS, GKTQG, DLPG, TKID, and FSS. Mg(2+) is bound by residues S37 and T59.

The protein belongs to the TRAFAC class TrmE-Era-EngA-EngB-Septin-like GTPase superfamily. EngB GTPase family. The cofactor is Mg(2+).

In terms of biological role, necessary for normal cell division and for the maintenance of normal septation. In Desulfotalea psychrophila (strain LSv54 / DSM 12343), this protein is Probable GTP-binding protein EngB.